The chain runs to 684 residues: Glycine--tRNA ligase beta subunit (684 aa).

It belongs to the class-II aminoacyl-tRNA synthetase family. Tetramer of two alpha and two beta subunits.

The protein localises to the cytoplasm. The enzyme catalyses tRNA(Gly) + glycine + ATP = glycyl-tRNA(Gly) + AMP + diphosphate. This chain is Glycine--tRNA ligase beta subunit, found in Pseudomonas fluorescens (strain Pf0-1).